The following is a 308-amino-acid chain: Testis-specific Y-encoded protein 8 (308 aa).

This sequence belongs to the nucleosome assembly protein (NAP) family.

The protein resides in the cytoplasm. It localises to the nucleus. Functionally, may be involved in sperm differentiation and proliferation. The protein is Testis-specific Y-encoded protein 8 (TSPY8) of Homo sapiens (Human).